The chain runs to 207 residues: Large ribosomal subunit protein uL4 (207 aa).

This sequence belongs to the universal ribosomal protein uL4 family. Part of the 50S ribosomal subunit.

Functionally, one of the primary rRNA binding proteins, this protein initially binds near the 5'-end of the 23S rRNA. It is important during the early stages of 50S assembly. It makes multiple contacts with different domains of the 23S rRNA in the assembled 50S subunit and ribosome. Forms part of the polypeptide exit tunnel. The chain is Large ribosomal subunit protein uL4 from Geobacter metallireducens (strain ATCC 53774 / DSM 7210 / GS-15).